The following is a 90-amino-acid chain: Putative Fis-like DNA-binding protein (90 aa).

The H-T-H motif DNA-binding region spans 66–85 (QSRAAALLGIHRATLRKKLK).

The protein belongs to the transcriptional regulatory Fis family.

The protein is Putative Fis-like DNA-binding protein of Xylella fastidiosa (strain 9a5c).